Here is an 876-residue protein sequence, read N- to C-terminus: Alanine--tRNA ligase (876 aa).

An N6-acetyllysine modification is found at Lys-74. His-564, His-568, Cys-666, and His-670 together coordinate Zn(2+).

It belongs to the class-II aminoacyl-tRNA synthetase family. Homotetramer. Zn(2+) is required as a cofactor.

The protein resides in the cytoplasm. It carries out the reaction tRNA(Ala) + L-alanine + ATP = L-alanyl-tRNA(Ala) + AMP + diphosphate. Its function is as follows. Catalyzes the attachment of alanine to tRNA(Ala) in a two-step reaction: alanine is first activated by ATP to form Ala-AMP and then transferred to the acceptor end of tRNA(Ala). Also edits incorrectly charged Ser-tRNA(Ala) and Gly-tRNA(Ala) via its editing domain. The chain is Alanine--tRNA ligase from Escherichia coli (strain SMS-3-5 / SECEC).